Consider the following 51-residue polypeptide: uncharacterized protein (51 aa).

Positions 1 to 51 (MKRKAEVNEAIKNNNTPTESMDPNSYKTQYHDDPNFRGANRNSKQGQQGGM) are disordered. Composition is skewed to polar residues over residues 11-28 (IKNN…SYKT) and 40-51 (NRNSKQGQQGGM).

This is an uncharacterized protein from Bacillus subtilis (strain 168).